The following is a 438-amino-acid chain: uncharacterized protein (438 aa).

A signal peptide spans 1–20 (MNTRLALVLCAVGSGVLSFS). C21 carries the N-palmitoyl cysteine lipid modification. A lipid anchor (S-diacylglycerol cysteine) is attached at C21.

Its subcellular location is the cell membrane. This is an uncharacterized protein from Treponema pallidum (strain Nichols).